A 284-amino-acid polypeptide reads, in one-letter code: Cell division protein ZipA (284 aa).

Residue methionine 1 is a topological domain, periplasmic. A helical transmembrane segment spans residues glutamate 2–phenylalanine 22. Topologically, residues aspartate 23–arginine 284 are cytoplasmic. A disordered region spans residues proline 47–proline 140. Basic and acidic residues-rich tracts occupy residues leucine 62–leucine 75, arginine 83–glutamine 102, and serine 119–proline 140.

Belongs to the ZipA family. Interacts with FtsZ via their C-terminal domains.

The protein resides in the cell inner membrane. Essential cell division protein that stabilizes the FtsZ protofilaments by cross-linking them and that serves as a cytoplasmic membrane anchor for the Z ring. Also required for the recruitment to the septal ring of downstream cell division proteins. In Pseudomonas fluorescens (strain ATCC BAA-477 / NRRL B-23932 / Pf-5), this protein is Cell division protein ZipA.